Reading from the N-terminus, the 544-residue chain is Putative lipase ATG15 (544 aa).

The Cytoplasmic segment spans residues 1 to 45 (MVADFDSGWYEGAGDELGQGARNGVLRERLGGNEKAQVVRSRRKA). The chain crosses the membrane as a helical; Signal-anchor for type II membrane protein span at residues 46–66 (VAWNVLMVLGLILYVLYSACF). Over 67-544 (AQARQWWRTN…NWFGYCTEYA (478 aa)) the chain is Lumenal. N-linked (GlcNAc...) asparagine glycans are attached at residues N200, N229, and N234. S362 (charge relay system) is an active-site residue. Positions 508 to 530 (PMPSSVASKPTPTPTSPGSPSST) are disordered.

The protein belongs to the AB hydrolase superfamily. Lipase family. Binds to both phosphatidylinositol (PI) and phosphatidylinositol 3,5-bisphosphate (PIP2).

It is found in the endosome. Its subcellular location is the multivesicular body membrane. It localises to the prevacuolar compartment membrane. It catalyses the reaction a triacylglycerol + H2O = a diacylglycerol + a fatty acid + H(+). Functionally, lipase which is essential for lysis of subvacuolar cytoplasm to vacuole targeted bodies and intravacuolar autophagic bodies. Involved in the lysis of intravacuolar multivesicular body (MVB) vesicles. The intravacuolar membrane disintegration by ATG15 is critical to life span extension. The polypeptide is Putative lipase ATG15 (ATG15) (Eremothecium gossypii (strain ATCC 10895 / CBS 109.51 / FGSC 9923 / NRRL Y-1056) (Yeast)).